Consider the following 59-residue polypeptide: Conorfamide-Ep1 (59 aa).

A signal peptide spans 1 to 19; the sequence is MSGCGFLLLALLLLVTVEA. The propeptide occupies 20-25; the sequence is TKMEKK. The residue at position 43 (Ile43) is an Isoleucine amide. Residues 45 to 59 constitute a propeptide that is removed on maturation; that stretch reads RRDMQSPLLSERLRF.

Belongs to the FARP (FMRFamide related peptide) family. As to expression, expressed by the venom duct.

It is found in the secreted. In terms of biological role, neurotoxin that is active on vertebrates. When tested at high doses (10 uM), the toxin affects all zebrafish and mouse DRG neurons in culture, which could be an indication of an effect on a widely expressed receptor or ion channel found in both species. At low doses (1 uM), the effects of the toxin are confined to a specific subpopulation of zebrafish and mouse DRG neurons. In vivo, it induces long-lasting dramatic alterations in the locomotor behavior of zebrafish larvae. It rapidly induces hypoactivity and death of larvae at high doses and it causes hyperactivity at lower doses. In zebrafish adults, intramuscular injection causes the decrease of the movements and visited spaces. In mice, intracranial injection causes lethargy and prolonges sleeping phases and reduced movement. This Conus episcopatus (Bishop's cone) protein is Conorfamide-Ep1.